The primary structure comprises 266 residues: Phosphate import ATP-binding protein PstB (266 aa).

In terms of domain architecture, ABC transporter spans 15–261 (VQKSVVNKLN…PKNKQTEDYI (247 aa)). 50–57 (GPSGCGKS) is an ATP binding site.

It belongs to the ABC transporter superfamily. Phosphate importer (TC 3.A.1.7) family. As to quaternary structure, the complex is composed of two ATP-binding proteins (PstB), two transmembrane proteins (PstC and PstA) and a solute-binding protein (PstS).

It localises to the cell inner membrane. It carries out the reaction phosphate(out) + ATP + H2O = ADP + 2 phosphate(in) + H(+). Functionally, part of the ABC transporter complex PstSACB involved in phosphate import. Responsible for energy coupling to the transport system. This is Phosphate import ATP-binding protein PstB from Nitrosomonas europaea (strain ATCC 19718 / CIP 103999 / KCTC 2705 / NBRC 14298).